Reading from the N-terminus, the 89-residue chain is Large ribosomal subunit protein uL24 (89 aa).

It belongs to the universal ribosomal protein uL24 family. As to quaternary structure, part of the 50S ribosomal subunit.

One of two assembly initiator proteins, it binds directly to the 5'-end of the 23S rRNA, where it nucleates assembly of the 50S subunit. Its function is as follows. One of the proteins that surrounds the polypeptide exit tunnel on the outside of the subunit. This Oenococcus oeni (strain ATCC BAA-331 / PSU-1) protein is Large ribosomal subunit protein uL24.